A 439-amino-acid chain; its full sequence is FK506-binding protein 59 (439 aa).

PPIase FKBP-type domains follow at residues 32 to 120 (GCTV…LGWK) and 149 to 235 (GAFV…VDCG). 3 TPR repeats span residues 252–285 (AKVY…LPTT), 297–330 (VATH…DKNN), and 331–364 (VKAL…EPGN).

As to quaternary structure, interacts with inaD and trpl, and may be part of the inaD signaling complex. In terms of tissue distribution, expression in the embryo is limited to three tissues: lymph glands, Garland cells and oenocyte cells.

It catalyses the reaction [protein]-peptidylproline (omega=180) = [protein]-peptidylproline (omega=0). May have a role in phototransduction; inhibits or prevents Ca(2+) induced stimulation of the trpl ion channel. This chain is FK506-binding protein 59, found in Drosophila melanogaster (Fruit fly).